Here is a 30-residue protein sequence, read N- to C-terminus: Trypsin inhibitor 4 (30 aa).

Disulfide bonds link Cys-3-Cys-20, Cys-10-Cys-22, and Cys-16-Cys-29.

It belongs to the protease inhibitor I7 (squash-type serine protease inhibitor) family.

The protein localises to the secreted. Functionally, inhibits trypsin. In Cucumis sativus (Cucumber), this protein is Trypsin inhibitor 4.